The sequence spans 369 residues: Serpentine receptor class epsilon-2 (369 aa).

The Extracellular portion of the chain corresponds to 1–20 (MLIQYHKISNNDPNRIQLLS). The chain crosses the membrane as a helical span at residues 21-41 (MIFCEIILLIFELFEFAAIIF). Topologically, residues 42-55 (NMSRYQFHFNLKVV) are cytoplasmic. Residues 56–76 (VGYAIFAYWFDIIARITIAFF) form a helical membrane-spanning segment. The Extracellular portion of the chain corresponds to 77–118 (EIGLFNLDDQTIAVETEKLPWNYKNMFFMLLFCCSTYRVYFM). A helical transmembrane segment spans residues 119 to 139 (FLICSVTLLLAVERFLATIWV). Residues 140–148 (STYESVQHK) lie on the Cytoplasmic side of the membrane. The chain crosses the membrane as a helical span at residues 149–169 (WVSIVLTSTNSIAGIFGSLLF). Topologically, residues 170–178 (HYELIFDTA) are extracellular. Residues 179–199 (VWCSLGLCFNFVSIFLYVILF) traverse the membrane as a helical segment. At 200-234 (NSNKSKIELCQTREITQSYTLSLRFQLNENLKIMN) the chain is on the cytoplasmic side. A helical transmembrane segment spans residues 235 to 255 (WIKNSILVVTCFNTLLAGFLI). At 256 to 274 (ASNNEYLKNDYPVLVKCCH) the chain is on the extracellular side. The chain crosses the membrane as a helical span at residues 275-295 (TFLNLGIAIYAQVVFFVAILA). The Cytoplasmic portion of the chain corresponds to 296 to 369 (DRHFRTYFLR…VAKKKRFWRV (74 aa)).

Belongs to the nematode receptor-like protein sre family.

The protein localises to the cell membrane. The chain is Serpentine receptor class epsilon-2 (sre-2) from Caenorhabditis elegans.